A 352-amino-acid polypeptide reads, in one-letter code: Iron-sulfur cluster carrier protein (352 aa).

114–121 (GKGGVGKS) contributes to the ATP binding site.

This sequence belongs to the Mrp/NBP35 ATP-binding proteins family. As to quaternary structure, homodimer. Interacts with BrxC.

In terms of biological role, binds and transfers iron-sulfur (Fe-S) clusters to target apoproteins. Can hydrolyze ATP. Its function is as follows. Negatively regulates the expression of hpr/scoC. The effect on hpr/scoC may be indirect. The protein is Iron-sulfur cluster carrier protein (salA) of Bacillus subtilis (strain 168).